A 330-amino-acid polypeptide reads, in one-letter code: MSAEASGSSGGHAVTVSGSSPSSSSHVGEEKPGRSLVSSKYVKLNVGGTLHYTTVQTLSKEDSLLRSICDGSTEVSIDSEGWVVLDRCGRHFSLVLNFLRDGTVPLPDSTRELEEVLKEAQYYRLQGLVQHCLSTLQKRRDVCRGCHIPMITSAKEEQRMIATCRKPVVKLQNNRGNNKYSYTSNSDDNLLKNIELFDKLGLRFNGRVLFIKDVLGDEICCWSFYGEGRKIAEVCCTSIVYATEKKQTKVEFPEARIFEETLNILIYENGRGSGGMALLESGGVSSSGAGQSEEEGAGAGGGDRRVRRIHVRRHIMHDERGHGQQTVYKD.

A disordered region spans residues 1–34 (MSAEASGSSGGHAVTVSGSSPSSSSHVGEEKPGR). The BTB domain maps to 40–108 (KYVKLNVGGT…LRDGTVPLPD (69 aa)). Positions 282–291 (GGVSSSGAGQ) are enriched in low complexity. A disordered region spans residues 282 to 304 (GGVSSSGAGQSEEEGAGAGGGDR).

The protein belongs to the BACURD family.

It is found in the nucleus. In terms of biological role, substrate-specific adapter of a BCR (BTB-CUL3-RBX1) E3 ubiquitin-protein ligase complex required for synaptic transmission. The BCR(KCTD13) E3 ubiquitin ligase complex mediates the ubiquitination of RHOA, leading to its degradation by the proteasome, thereby regulating the actin cytoskeleton and promoting synaptic transmission. In Danio rerio (Zebrafish), this protein is BTB/POZ domain-containing adapter for CUL3-mediated RhoA degradation protein 1.